The sequence spans 361 residues: Carbamoyl phosphate synthase small chain (361 aa).

The segment at 1–173 is CPSase; sequence MRAALALEDG…SVREEYRFSD (173 aa). L-glutamine is bound by residues S45, G225, and G227. Residues 177–361 enclose the Glutamine amidotransferase type-1 domain; it reads EIVVIDCGVK…DEFLAMCREH (185 aa). Residue C252 is the Nucleophile of the active site. L-glutamine-binding residues include L253, Q256, N294, G296, and F297. Active-site residues include H337 and E339.

The protein belongs to the CarA family. Composed of two chains; the small (or glutamine) chain promotes the hydrolysis of glutamine to ammonia, which is used by the large (or ammonia) chain to synthesize carbamoyl phosphate. Tetramer of heterodimers (alpha,beta)4.

It catalyses the reaction hydrogencarbonate + L-glutamine + 2 ATP + H2O = carbamoyl phosphate + L-glutamate + 2 ADP + phosphate + 2 H(+). It carries out the reaction L-glutamine + H2O = L-glutamate + NH4(+). The protein operates within amino-acid biosynthesis; L-arginine biosynthesis; carbamoyl phosphate from bicarbonate: step 1/1. Its pathway is pyrimidine metabolism; UMP biosynthesis via de novo pathway; (S)-dihydroorotate from bicarbonate: step 1/3. Small subunit of the glutamine-dependent carbamoyl phosphate synthetase (CPSase). CPSase catalyzes the formation of carbamoyl phosphate from the ammonia moiety of glutamine, carbonate, and phosphate donated by ATP, constituting the first step of 2 biosynthetic pathways, one leading to arginine and/or urea and the other to pyrimidine nucleotides. The small subunit (glutamine amidotransferase) binds and cleaves glutamine to supply the large subunit with the substrate ammonia. This chain is Carbamoyl phosphate synthase small chain, found in Methanopyrus kandleri (strain AV19 / DSM 6324 / JCM 9639 / NBRC 100938).